The sequence spans 333 residues: Atrochrysone carboxyl ACP thioesterase (333 aa).

Residues H104, H106, D108, and H109 each contribute to the Zn(2+) site. D108 serves as the catalytic Proton donor/acceptor.

The protein belongs to the metallo-beta-lactamase superfamily. Zn(2+) serves as cofactor.

The catalysed reaction is atrochrysone carboxyl-[ACP] + H2O = atrochrysone carboxylate + holo-[ACP] + H(+). It functions in the pathway pigment biosynthesis. Atrochrysone carboxyl ACP thioesterase; part of the gene cluster that mediates the biosynthesis of the bianthraquinone cladofulvin, a conidial pigment not required for virulence but that plays a role in fitness and resistance to environmental stresses including UV light and low-temperature stress. The pathway begins with the synthesis of atrochrysone thioester by the polyketide synthase (PKS) claG. The atrochrysone carboxyl ACP thioesterase claF then breaks the thioester bond and releases the atrochrysone carboxylic acid from claG. This compound is decarboxylated by claH to yield emodin, which is further converted to chrysophanol hydroquinone by the reductase claC and the dehydratase claB. The cytochrome P450 monooxygenase claM then catalyzes the dimerization of nataloe-emodin to cladofulvin. The polypeptide is Atrochrysone carboxyl ACP thioesterase (Passalora fulva (Tomato leaf mold)).